The sequence spans 242 residues: Methylthioribulose-1-phosphate dehydratase (242 aa).

Serine 87 carries the phosphoserine modification. Cysteine 97 provides a ligand contact to substrate. Zn(2+) contacts are provided by histidine 115 and histidine 117. Residue glutamate 139 is the Proton donor/acceptor of the active site. Histidine 195 is a binding site for Zn(2+).

The protein belongs to the aldolase class II family. MtnB subfamily. In terms of assembly, homotetramer. Interacts with APAF1. May interact with CASP1. Zn(2+) serves as cofactor. Isoform 1 is ubiquitously expressed. Isoform 2 is expressed at lower levels and detected in heart, brain, pancreas, liver, placenta, skeletal muscle and kidney.

It localises to the cytoplasm. It carries out the reaction 5-(methylsulfanyl)-D-ribulose 1-phosphate = 5-methylsulfanyl-2,3-dioxopentyl phosphate + H2O. Its pathway is amino-acid biosynthesis; L-methionine biosynthesis via salvage pathway; L-methionine from S-methyl-5-thio-alpha-D-ribose 1-phosphate: step 2/6. Catalyzes the dehydration of methylthioribulose-1-phosphate (MTRu-1-P) into 2,3-diketo-5-methylthiopentyl-1-phosphate (DK-MTP-1-P). Functions in the methionine salvage pathway, which plays a key role in cancer, apoptosis, microbial proliferation and inflammation. May inhibit the CASP1-related inflammatory response (pyroptosis), the CASP9-dependent apoptotic pathway and the cytochrome c-dependent and APAF1-mediated cell death. This Homo sapiens (Human) protein is Methylthioribulose-1-phosphate dehydratase.